A 516-amino-acid chain; its full sequence is Protein DML1 (516 aa).

The protein belongs to the misato family.

It localises to the mitochondrion. Functionally, involved in the partitioning of the mitochondrial organelle and mitochondrial DNA (mtDNA) inheritance. In Coccidioides immitis (strain RS) (Valley fever fungus), this protein is Protein DML1 (DML1).